The following is a 353-amino-acid chain: Photosystem II protein D1 (353 aa).

An N-acetylthreonine modification is found at T2. T2 bears the Phosphothreonine mark. 3 helical membrane passes run 29–46 (YIGW…TATS), 118–133 (HFLL…EWEL), and 142–156 (WIAV…AAAA). H118 contributes to the chlorophyll a binding site. Y126 lines the pheophytin a pocket. [CaMn4O5] cluster-binding residues include D170 and E189. A helical membrane pass occupies residues 197 to 218 (FHMLGVAGVFGGSLFSAMHGSL). H198 is a binding site for chlorophyll a. A quinone contacts are provided by residues H215 and 264–265 (SF). H215 is a binding site for Fe cation. H272 lines the Fe cation pocket. A helical transmembrane segment spans residues 274 to 288 (FLAAWPVVGIWFTAL). Positions 332, 333, 342, and 344 each coordinate [CaMn4O5] cluster. Residues 345 to 353 (SVDAPSING) constitute a propeptide that is removed on maturation.

This sequence belongs to the reaction center PufL/M/PsbA/D family. PSII is composed of 1 copy each of membrane proteins PsbA, PsbB, PsbC, PsbD, PsbE, PsbF, PsbH, PsbI, PsbJ, PsbK, PsbL, PsbM, PsbT, PsbX, PsbY, PsbZ, Psb30/Ycf12, at least 3 peripheral proteins of the oxygen-evolving complex and a large number of cofactors. It forms dimeric complexes. The D1/D2 heterodimer binds P680, chlorophylls that are the primary electron donor of PSII, and subsequent electron acceptors. It shares a non-heme iron and each subunit binds pheophytin, quinone, additional chlorophylls, carotenoids and lipids. D1 provides most of the ligands for the Mn4-Ca-O5 cluster of the oxygen-evolving complex (OEC). There is also a Cl(-1) ion associated with D1 and D2, which is required for oxygen evolution. The PSII complex binds additional chlorophylls, carotenoids and specific lipids. serves as cofactor. In terms of processing, tyr-161 forms a radical intermediate that is referred to as redox-active TyrZ, YZ or Y-Z. Post-translationally, C-terminally processed by CTPA; processing is essential to allow assembly of the oxygen-evolving complex and thus photosynthetic growth.

It localises to the plastid. The protein localises to the chloroplast thylakoid membrane. The enzyme catalyses 2 a plastoquinone + 4 hnu + 2 H2O = 2 a plastoquinol + O2. In terms of biological role, photosystem II (PSII) is a light-driven water:plastoquinone oxidoreductase that uses light energy to abstract electrons from H(2)O, generating O(2) and a proton gradient subsequently used for ATP formation. It consists of a core antenna complex that captures photons, and an electron transfer chain that converts photonic excitation into a charge separation. The D1/D2 (PsbA/PsbD) reaction center heterodimer binds P680, the primary electron donor of PSII as well as several subsequent electron acceptors. This is Photosystem II protein D1 from Adiantum capillus-veneris (Maidenhair fern).